We begin with the raw amino-acid sequence, 899 residues long: Ewing's tumor-associated antigen 1 homolog (899 aa).

Positions 1–82 are disordered; the sequence is MSRRRKHGDS…TEERYETPKR (82 aa). A compositionally biased stretch (basic and acidic residues) spans 71–81; it reads SNTEERYETPK. Positions 105–111 match the ATR-activation domain (AAD) motif; sequence IFWDQNS. The stretch at 180-210 forms a coiled coil; it reads TKLKSQNQEEELMKLAKQFDKNMEELDVIQE. Residues lysine 416 and lysine 444 each participate in a glycyl lysine isopeptide (Lys-Gly) (interchain with G-Cter in SUMO2) cross-link. Serine 467 is subject to Phosphoserine. Residues lysine 485 and lysine 539 each participate in a glycyl lysine isopeptide (Lys-Gly) (interchain with G-Cter in SUMO2) cross-link. The RBM1 motif signature appears at 607–622; the sequence is DDVDDDILYQACDDIE. Serine 810 is modified (phosphoserine). Residues 833 to 899 form a disordered region; sequence NKTVNPLPGK…AQASSVKKGR (67 aa). A compositionally biased stretch (basic and acidic residues) spans 859 to 877; the sequence is PSKEEEEKNRKCSPEEIQR. The short motif at 868–890 is the RBM2 motif element; that stretch reads RKCSPEEIQRKRQAALIRRMAKA.

As to quaternary structure, interacts (via RBM1 motif) with RPA1. Interacts (via RBM2 motif) with RPA2. Interacts (via the ATR-activation domain motif) with ATR. Post-translationally, phosphorylated by ATR.

The protein resides in the nucleus. In terms of biological role, replication stress response protein that accumulates at DNA damage sites and promotes replication fork progression and integrity. Recruited to stalled replication forks via interaction with the RPA complex and directly stimulates ATR kinase activity independently of TOPBP1. Probably only regulates a subset of ATR targets. The sequence is that of Ewing's tumor-associated antigen 1 homolog from Bos taurus (Bovine).